The following is a 410-amino-acid chain: Trifunctional NAD biosynthesis/regulator protein NadR (410 aa).

In terms of domain architecture, HTH cro/C1-type spans 7–62 (LKTAIKQQGCTLQQVADASGMTKGYLSQLLNAKIKSPSAQKLEALHRFLGLEFPRR). The segment at residues 18–37 (LQQVADASGMTKGYLSQLLN) is a DNA-binding region (H-T-H motif). The nicotinamide mononucleotide adenylyltransferase stretch occupies residues 63 to 229 (QKNIGVVFGK…EYIPTEVKPF (167 aa)). Residues 70 to 73 (FGKF), His-77, Arg-104, 144 to 157 (EEGMEPYPHGWDVW), 177 to 179 (TSE), 204 to 206 (MNI), 259 to 261 (SAW), and 294 to 297 (YIDF) each bind NAD(+). Residues 230–410 (FVRTVAILGG…LVKEMMGEQG (181 aa)) are ribosylnicotinamide kinase.

The protein in the central section; belongs to the bacterial NMN adenylyltransferase family. It in the C-terminal section; belongs to the bacterial RNK family. Homotetramer.

The protein localises to the cell membrane. Its subcellular location is the cytoplasm. The catalysed reaction is beta-nicotinamide D-ribonucleotide + ATP + H(+) = diphosphate + NAD(+). It catalyses the reaction beta-nicotinamide D-riboside + ATP = beta-nicotinamide D-ribonucleotide + ADP + H(+). Its pathway is cofactor biosynthesis; NAD(+) biosynthesis [regulation]. It functions in the pathway cofactor biosynthesis; NAD(+) biosynthesis; NAD(+) from nicotinamide D-ribonucleotide: step 1/1. With respect to regulation, feed-back regulated by NAD. A high level of NAD causes NadR to lose enzymatic activity and repress several NAD synthetic genes; conversely, a low NAD level activates the assimilatory enzymatic activities and leads to derepression of biosynthetic genes. Its function is as follows. This enzyme has three activities: DNA binding, nicotinamide mononucleotide (NMN) adenylyltransferase and ribosylnicotinamide (RN) kinase. The DNA-binding domain binds to the nadB operator sequence in an NAD- and ATP-dependent manner. As NAD levels increase within the cell, the affinity of NadR for the nadB operator regions of nadA, nadB, and pncB increases, repressing the transcription of these genes. The RN kinase activity catalyzes the phosphorylation of RN to form nicotinamide ribonucleotide. The NMN adenylyltransferase activity catalyzes the transfer of the AMP moiety of ATP to nicotinamide ribonucleotide to form NAD(+). The NMN adenylyltransferase domain also functions as the NAD and ATP sensor. The polypeptide is Trifunctional NAD biosynthesis/regulator protein NadR (nadR) (Salmonella typhimurium (strain LT2 / SGSC1412 / ATCC 700720)).